Reading from the N-terminus, the 226-residue chain is MASPSRQPPLGGSGLLHGSRARSYGSLVQSSCSPVRERRLEHQLEPGDTLAGLALKYGVTMEQIKRTNRLYTNDSIFLKKTLYIPILSEPRDLFNGLDSEEENDGEEEVRPSKDEIGSSSGRRKNRGSGSGRPNGTGLPPHQETSTPSHDLSASDFLKKLDSQISLSKKAAAQKLRKGESGVPEEDTGLYPSSPRMQQRAVLGPVPLTRTSRTQTLRDQEDEIFKL.

Ser-23 and Ser-33 each carry phosphoserine. Residues 40 to 84 form the LysM domain; it reads LEHQLEPGDTLAGLALKYGVTMEQIKRTNRLYTNDSIFLKKTLYI. Residues 95-156 are disordered; the sequence is NGLDSEEEND…PSHDLSASDF (62 aa). The span at 98 to 107 shows a compositional bias: acidic residues; it reads DSEEENDGEE. Ser-99 is modified (phosphoserine). Residues 142–151 show a composition bias toward polar residues; the sequence is QETSTPSHDL. 4 positions are modified to phosphoserine: Ser-165, Ser-180, Ser-193, and Ser-211. The tract at residues 170 to 226 is disordered; sequence AAAQKLRKGESGVPEEDTGLYPSSPRMQQRAVLGPVPLTRTSRTQTLRDQEDEIFKL. Residues 215 to 226 are compositionally biased toward basic and acidic residues; sequence TLRDQEDEIFKL.

This is LysM and putative peptidoglycan-binding domain-containing protein 1 (Lysmd1) from Mus musculus (Mouse).